The sequence spans 259 residues: Major cell-binding factor (259 aa).

An N-terminal signal peptide occupies residues 1 to 26 (MVFRKSLLKLAVFALGACVAFSNANA).

It belongs to the bacterial solute-binding protein 3 family.

The protein localises to the cell surface. Common antigen and a major cell adherence molecule. Most probably involved, with PEB1C, in a binding-protein-dependent transport system for an amino acid. May be involved in binding to intestinal cells. The polypeptide is Major cell-binding factor (peb1A) (Campylobacter jejuni subsp. jejuni serotype O:23/36 (strain 81-176)).